Reading from the N-terminus, the 343-residue chain is Aspartate-semialdehyde dehydrogenase (343 aa).

Residues 20-23 (SGAV) and 48-49 (RS) contribute to the NADP(+) site. Phosphate is bound at residue Arg108. Cys137 acts as the Acyl-thioester intermediate in catalysis. Gln164 provides a ligand contact to substrate. 167–168 (SG) is an NADP(+) binding site. Lys221 provides a ligand contact to phosphate. Arg243 contributes to the substrate binding site. Residue His250 is the Proton acceptor of the active site. Gln323 contributes to the NADP(+) binding site.

This sequence belongs to the aspartate-semialdehyde dehydrogenase family. As to quaternary structure, homodimer.

The catalysed reaction is L-aspartate 4-semialdehyde + phosphate + NADP(+) = 4-phospho-L-aspartate + NADPH + H(+). It functions in the pathway amino-acid biosynthesis; L-lysine biosynthesis via DAP pathway; (S)-tetrahydrodipicolinate from L-aspartate: step 2/4. The protein operates within amino-acid biosynthesis; L-methionine biosynthesis via de novo pathway; L-homoserine from L-aspartate: step 2/3. Its pathway is amino-acid biosynthesis; L-threonine biosynthesis; L-threonine from L-aspartate: step 2/5. Catalyzes the NADPH-dependent formation of L-aspartate-semialdehyde (L-ASA) by the reductive dephosphorylation of L-aspartyl-4-phosphate. In Prochlorococcus marinus (strain SARG / CCMP1375 / SS120), this protein is Aspartate-semialdehyde dehydrogenase.